Consider the following 261-residue polypeptide: Mite allergen Der p 3 (261 aa).

An N-terminal signal peptide occupies residues 1–18 (MIIYNILIVLLLAINTLA). A propeptide spanning residues 19-29 (NPILPASPNAT) is cleaved from the precursor. A Peptidase S1 domain is found at 30–260 (IVGGEKALAG…FIDWIESKRS (231 aa)). C54 and C70 are joined by a disulfide. Residues H69 and D114 each act as charge relay system in the active site. Intrachain disulfides connect C181–C198 and C210–C236. S214 serves as the catalytic Charge relay system.

The protein belongs to the peptidase S1 family.

The protein localises to the secreted. This is Mite allergen Der p 3 (DERP3) from Dermatophagoides pteronyssinus (European house dust mite).